The primary structure comprises 530 residues: B3 domain-containing protein REM-like 3 (530 aa).

2 consecutive DNA-binding regions (TF-B3) follow at residues 11-103 (KPHF…FGLS) and 144-241 (DFVV…FPLE). The segment at 251–276 (SKKVKQEVEHEESVKEETNVESGKLK) is disordered. Positions 254–276 (VKQEVEHEESVKEETNVESGKLK) are enriched in basic and acidic residues. DNA-binding regions (TF-B3) lie at residues 296–393 (NFVV…FPLE) and 431–530 (SFVV…WDKK).

The protein resides in the nucleus. In Arabidopsis thaliana (Mouse-ear cress), this protein is B3 domain-containing protein REM-like 3.